Here is a 190-residue protein sequence, read N- to C-terminus: MFHQVWAALLSLYGLLFNSMNQCPEHSQLTALGMDDTETPEPHLGLWYFIAGAASTTEELATFDPVDNIVFNMAAGSAPRQLQLRATIRTKSGVCVPRKWTYRLTEGKGNMELRTEGRPDMKTDLFSSSCPGGIMLKETGQGYQRFLLYNRSPHPPEKCVEEFQSLTSCLDFKAFLVTPRNQEACPLSSK.

Residues 1 to 22 (MFHQVWAALLSLYGLLFNSMNQ) constitute a signal peptide (not cleaved). 3 disulfides stabilise this stretch: Cys-23–Cys-169, Cys-95–Cys-185, and Cys-130–Cys-159. Residues Glu-138 and Arg-145 each coordinate tetradecanoate.

It belongs to the calycin superfamily. Lipocalin family. Highly divergent. Interacts with LRP2; LRP2 mediates APOM renal uptake and subsequent lysosomal degradation. As to expression, expressed by the liver; secreted in plasma.

Its subcellular location is the secreted. Probably involved in lipid transport. Can bind sphingosine-1-phosphate, myristic acid, palmitic acid and stearic acid, retinol, all-trans-retinoic acid and 9-cis-retinoic acid. The chain is Apolipoprotein M (Apom) from Mus musculus (Mouse).